Consider the following 363-residue polypeptide: Ribosomal RNA large subunit methyltransferase M (363 aa).

S-adenosyl-L-methionine-binding positions include Ser190, 223–226 (CPGG), Asp242, Asp262, and Asp279. The Proton acceptor role is filled by Lys308.

This sequence belongs to the class I-like SAM-binding methyltransferase superfamily. RNA methyltransferase RlmE family. RlmM subfamily. In terms of assembly, monomer.

It is found in the cytoplasm. It catalyses the reaction cytidine(2498) in 23S rRNA + S-adenosyl-L-methionine = 2'-O-methylcytidine(2498) in 23S rRNA + S-adenosyl-L-homocysteine + H(+). Catalyzes the 2'-O-methylation at nucleotide C2498 in 23S rRNA. This Vibrio atlanticus (strain LGP32) (Vibrio splendidus (strain Mel32)) protein is Ribosomal RNA large subunit methyltransferase M.